A 402-amino-acid polypeptide reads, in one-letter code: B3 domain-containing protein LFL1 (402 aa).

The interval 1–174 (MRGEERWQEQ…AAPRPSSHHT (174 aa)) is disordered. Low complexity predominate over residues 74 to 87 (ARPPTLAASAAAAS). The segment covering 88–102 (SPPPPPPPPIPPLPP) has biased composition (pro residues). 2 stretches are compositionally biased toward low complexity: residues 103–139 (STST…AAVS) and 156–169 (PRPA…APRP). The segment at residues 181–284 (LQKELRYSDV…RFVIGAKKAG (104 aa)) is a DNA-binding region (TF-B3). Positions 381-402 (LHVTDDKSGHSLIPNPKSGPHM) are disordered.

Expressed in anthers, pollen grains and young developing embryos.

It is found in the nucleus. In terms of biological role, transcription repressor involved in flowering time regulation. Represses the flowering activator EHD1 by binding specifically to the DNA sequence 5'-CATGCATG-3 of its promoter. This chain is B3 domain-containing protein LFL1 (LFL1), found in Oryza sativa subsp. japonica (Rice).